A 258-amino-acid chain; its full sequence is MLHVISPAKTLDFETPPITRHFTQPQFLDHAQQLIDELRPLNPQQVSELMDISEKLGVLNAQRFLDWQLPFTTENAKQAVLAFKGDVYTGMQADRFSSQDLAWAQQRLRILSGLYGLLRPLDLIQPYRLEMGTHFANSRGKNLYEFWGNRLTEQLNRELAQAPQPLLVNLASNEYWGAVQARHLSGEVITPTFKDRKNGQYKIISFFAKKARGMMSAWIIQQRLDQAEGLKDFNSAGYRYNPAMSSAREWVFTREEPV.

This sequence belongs to the UPF0246 family.

The sequence is that of UPF0246 protein CJA_0191 from Cellvibrio japonicus (strain Ueda107) (Pseudomonas fluorescens subsp. cellulosa).